Consider the following 387-residue polypeptide: Formate-dependent phosphoribosylglycinamide formyltransferase (387 aa).

Residues 21–22 and Glu-81 contribute to the N(1)-(5-phospho-beta-D-ribosyl)glycinamide site; that span reads EL. ATP contacts are provided by residues Arg-113, Lys-154, 159 to 164, 193 to 196, and Glu-201; these read SSGHGQ and EEFV. The ATP-grasp domain occupies 118-306; it reads VFAAETLDLK…EFALHVRAVL (189 aa). 2 residues coordinate Mg(2+): Glu-265 and Glu-277. N(1)-(5-phospho-beta-D-ribosyl)glycinamide is bound by residues Asp-284, Lys-352, and 359-360; that span reads RR.

Belongs to the PurK/PurT family. Homodimer.

It catalyses the reaction N(1)-(5-phospho-beta-D-ribosyl)glycinamide + formate + ATP = N(2)-formyl-N(1)-(5-phospho-beta-D-ribosyl)glycinamide + ADP + phosphate + H(+). Its pathway is purine metabolism; IMP biosynthesis via de novo pathway; N(2)-formyl-N(1)-(5-phospho-D-ribosyl)glycinamide from N(1)-(5-phospho-D-ribosyl)glycinamide (formate route): step 1/1. Its function is as follows. Involved in the de novo purine biosynthesis. Catalyzes the transfer of formate to 5-phospho-ribosyl-glycinamide (GAR), producing 5-phospho-ribosyl-N-formylglycinamide (FGAR). Formate is provided by PurU via hydrolysis of 10-formyl-tetrahydrofolate. The polypeptide is Formate-dependent phosphoribosylglycinamide formyltransferase (Sulfurovum sp. (strain NBC37-1)).